We begin with the raw amino-acid sequence, 484 residues long: Cobyric acid synthase (484 aa).

The GATase cobBQ-type domain occupies 249–438 (QLRVAVPVFT…LHGIFDRPET (190 aa)). The Nucleophile role is filled by C330. H430 is an active-site residue.

Belongs to the CobB/CobQ family. CobQ subfamily.

It participates in cofactor biosynthesis; adenosylcobalamin biosynthesis. Catalyzes amidations at positions B, D, E, and G on adenosylcobyrinic A,C-diamide. NH(2) groups are provided by glutamine, and one molecule of ATP is hydrogenolyzed for each amidation. This chain is Cobyric acid synthase, found in Vibrio cholerae serotype O1 (strain ATCC 39541 / Classical Ogawa 395 / O395).